Here is a 584-residue protein sequence, read N- to C-terminus: Protein DENND6A (584 aa).

The tract at residues 1–23 (MALWERGAGGAAEAGEDATEEPE) is disordered. The uDENN domain occupies 39–218 (HCVCVVGFDL…KLRIPTYRDK (180 aa)). One can recognise a cDENN domain in the interval 244-369 (EVDLFRCFCP…VKVKKLKNLK (126 aa)). One can recognise a dDENN domain in the interval 371–504 (LDSKPGVYTS…RSRQKEMTQN (134 aa)).

Belongs to the DENND6 family.

The protein resides in the recycling endosome. Its subcellular location is the cytoplasm. Its function is as follows. Guanine nucleotide exchange factor (GEF) for RAB14. The chain is Protein DENND6A (DENND6A) from Gallus gallus (Chicken).